Reading from the N-terminus, the 185-residue chain is MSNTASLKKEYAERIAPALKSQFQYSSTMQIPVLKKIVINQGLGMAVADKKIIEVAINEMTAITGQKAVATISRKDIANFKLRKKMPIGVMVTLRRERMYEFLEKLVRVALPRIRDFKGIETKFDGKGNYTLGIQEQIIFPEINIDSITRILGMNITFVTSAQTDEEGYALLKEFGLPFKNAKKD.

Belongs to the universal ribosomal protein uL5 family. As to quaternary structure, part of the 50S ribosomal subunit; part of the 5S rRNA/L5/L18/L25 subcomplex. Contacts the 5S rRNA and the P site tRNA. Forms a bridge to the 30S subunit in the 70S ribosome.

Its function is as follows. This is one of the proteins that bind and probably mediate the attachment of the 5S RNA into the large ribosomal subunit, where it forms part of the central protuberance. In the 70S ribosome it contacts protein S13 of the 30S subunit (bridge B1b), connecting the 2 subunits; this bridge is implicated in subunit movement. Contacts the P site tRNA; the 5S rRNA and some of its associated proteins might help stabilize positioning of ribosome-bound tRNAs. The sequence is that of Large ribosomal subunit protein uL5 from Bacteroides fragilis (strain ATCC 25285 / DSM 2151 / CCUG 4856 / JCM 11019 / LMG 10263 / NCTC 9343 / Onslow / VPI 2553 / EN-2).